A 211-amino-acid chain; its full sequence is Protein-L-isoaspartate O-methyltransferase (211 aa).

The active site involves Ser62.

It belongs to the methyltransferase superfamily. L-isoaspartyl/D-aspartyl protein methyltransferase family.

Its subcellular location is the cytoplasm. It carries out the reaction [protein]-L-isoaspartate + S-adenosyl-L-methionine = [protein]-L-isoaspartate alpha-methyl ester + S-adenosyl-L-homocysteine. In terms of biological role, catalyzes the methyl esterification of L-isoaspartyl residues in peptides and proteins that result from spontaneous decomposition of normal L-aspartyl and L-asparaginyl residues. It plays a role in the repair and/or degradation of damaged proteins. This chain is Protein-L-isoaspartate O-methyltransferase, found in Shewanella frigidimarina (strain NCIMB 400).